A 276-amino-acid polypeptide reads, in one-letter code: Bis(5'-nucleosyl)-tetraphosphatase, symmetrical (276 aa).

It belongs to the Ap4A hydrolase family.

It carries out the reaction P(1),P(4)-bis(5'-adenosyl) tetraphosphate + H2O = 2 ADP + 2 H(+). In terms of biological role, hydrolyzes diadenosine 5',5'''-P1,P4-tetraphosphate to yield ADP. The protein is Bis(5'-nucleosyl)-tetraphosphatase, symmetrical of Neisseria gonorrhoeae (strain ATCC 700825 / FA 1090).